A 225-amino-acid chain; its full sequence is Zinc finger protein 22 (225 aa).

A disordered region spans residues 1–35 (MRLGKPKGGISRSSSQGKVYENQRKTGRQRQRWGM). At Lys18 the chain carries N6-acetyllysine. 5 C2H2-type zinc fingers span residues 55–77 (YKCV…QKIH), 83–105 (HKCA…RRVH), 111–133 (YRCD…QRIH), 139–161 (YQCD…QRTH), and 167–189 (YQCS…TKVH). The segment at 183-225 (RQHTKVHEEEKPRKTRGRSLRAKTHSLSSWKAGKGRRSAAGLR) is disordered. Positions 195–206 (RKTRGRSLRAKT) are enriched in basic residues.

The protein belongs to the krueppel C2H2-type zinc-finger protein family.

Its subcellular location is the nucleus. Functionally, binds DNA through the consensus sequence 5'-CAATG-3'. May be involved in transcriptional regulation and may play a role in tooth formation. This chain is Zinc finger protein 22 (ZNF22), found in Bos taurus (Bovine).